Here is a 406-residue protein sequence, read N- to C-terminus: Terminal uridylyltransferase 7 (406 aa).

The N-terminal 15 residues, 1 to 15 (MNVAKREFIRGMMAH), are a transit peptide targeting the mitochondrion. Residues serine 54 and 64–65 (SD) each bind UTP. Positions 65 and 67 each coordinate Mg(2+). UTP is bound by residues 138-142 (GVENS), lysine 164, lysine 168, and 181-183 (NSF).

It belongs to the DNA polymerase type-B-like family. As to quaternary structure, component of the mitochondrial RNA editing core complex-like (RECC-like), also known as the editosome-like complex; only a small proportion of MEAT1 associates with the complex. Interacts with RNA-editing ligase REL1. The cofactor is Mg(2+).

Its subcellular location is the mitochondrion matrix. It catalyses the reaction RNA(n) + UTP = RNA(n)-3'-uridine ribonucleotide + diphosphate. In terms of biological role, terminal uridylyltransferase which, as part of the mitochondrial RNA editing core-like complex (RECC-like), is involved in the post-transcriptional editing of mitochondrial RNA, a process involving the addition and deletion of uridine (U) nucleotides in the pre-mRNA. Specifically, catalyzes the addition of U to single-stranded RNA with a preference for a 3'-terminal U and adds the number of Us specified by a guide RNA (gRNA) to precleaved double-stranded RNA editing substrates. Essential for insect and bloodstream developmental forms viability. The polypeptide is Terminal uridylyltransferase 7 (Trypanosoma brucei brucei).